The primary structure comprises 649 residues: Flavin-dependent oxygenase ucdD (649 aa).

Positions 92, 185, 344, 370, and 386 each coordinate FAD.

It belongs to the PheA/TfdB FAD monooxygenase family. In terms of assembly, homodimer. FAD is required as a cofactor.

It participates in secondary metabolite biosynthesis. Its function is as follows. Nonribosomal peptide synthetase that mediates the biosynthesis of usterphenyllins and uscandidusins, p-terphenyl derivatives. Within the pathway, ucdD catalyzes the formation of 3,15-dihydroxyterphenyllin via dihydroxylation at C-3 of ring A and C-15 of ring C of the terphenyllin intermediate. The pathway begin with the biosynthesis of 4-hydroxyphenylpyruvate (HPPA) from L-tyrosine, possibly by the aminotransferase ucdG. The nonribosomal peptide synthetase ucdA then condenses two HPPA units to produce atromentin. The key step in this pathway is the reduction and dehydration of atromentin to form a terphenyl triol intermediate, performed by the NAD-dependent dehydrogenase ucdB. Further O-methylation by the methyltransferase ucdC forms terphenyllin carrying two methoxy moieties at C-9 and C-12, and subsequent dihydroxylation at C-3 of ring A and C-15 of ring C by the flavin-dependent oxygenase ucdD leads to 3,15-dihydroxyterphenyllin. Prenylation by ucdE at position C-5 of ring A forms usterphenyllin B, and is followed by a second prenylation at position C-14 of ring C to form usterphenyllin A. The following furan ring formation that leads to uscandidusins A and B was proven to be an unexpected spontaneous non-enzymatic reaction. In Aspergillus ustus, this protein is Flavin-dependent oxygenase ucdD.